Consider the following 349-residue polypeptide: 4-hydroxy-3-methylbut-2-enyl diphosphate reductase (349 aa).

Cys-18 contacts [4Fe-4S] cluster. 2 residues coordinate (2E)-4-hydroxy-3-methylbut-2-enyl diphosphate: His-47 and His-83. 2 residues coordinate dimethylallyl diphosphate: His-47 and His-83. Residues His-47 and His-83 each coordinate isopentenyl diphosphate. Cys-105 contacts [4Fe-4S] cluster. His-133 provides a ligand contact to (2E)-4-hydroxy-3-methylbut-2-enyl diphosphate. His-133 serves as a coordination point for dimethylallyl diphosphate. His-133 is a binding site for isopentenyl diphosphate. Glu-135 acts as the Proton donor in catalysis. Thr-174 is a (2E)-4-hydroxy-3-methylbut-2-enyl diphosphate binding site. Position 204 (Cys-204) interacts with [4Fe-4S] cluster. (2E)-4-hydroxy-3-methylbut-2-enyl diphosphate-binding residues include Ser-232, Ser-233, Asn-234, and Ser-277. Residues Ser-232, Ser-233, Asn-234, and Ser-277 each coordinate dimethylallyl diphosphate. Residues Ser-232, Ser-233, Asn-234, and Ser-277 each coordinate isopentenyl diphosphate.

This sequence belongs to the IspH family. [4Fe-4S] cluster is required as a cofactor.

The catalysed reaction is isopentenyl diphosphate + 2 oxidized [2Fe-2S]-[ferredoxin] + H2O = (2E)-4-hydroxy-3-methylbut-2-enyl diphosphate + 2 reduced [2Fe-2S]-[ferredoxin] + 2 H(+). The enzyme catalyses dimethylallyl diphosphate + 2 oxidized [2Fe-2S]-[ferredoxin] + H2O = (2E)-4-hydroxy-3-methylbut-2-enyl diphosphate + 2 reduced [2Fe-2S]-[ferredoxin] + 2 H(+). It functions in the pathway isoprenoid biosynthesis; dimethylallyl diphosphate biosynthesis; dimethylallyl diphosphate from (2E)-4-hydroxy-3-methylbutenyl diphosphate: step 1/1. The protein operates within isoprenoid biosynthesis; isopentenyl diphosphate biosynthesis via DXP pathway; isopentenyl diphosphate from 1-deoxy-D-xylulose 5-phosphate: step 6/6. Functionally, catalyzes the conversion of 1-hydroxy-2-methyl-2-(E)-butenyl 4-diphosphate (HMBPP) into a mixture of isopentenyl diphosphate (IPP) and dimethylallyl diphosphate (DMAPP). Acts in the terminal step of the DOXP/MEP pathway for isoprenoid precursor biosynthesis. The chain is 4-hydroxy-3-methylbut-2-enyl diphosphate reductase from Bartonella bacilliformis (strain ATCC 35685 / KC583 / Herrer 020/F12,63).